The chain runs to 58 residues: Conotoxin TxXIIIA (58 aa).

A signal peptide spans 1 to 22; the sequence is MRCLPVFVILLLLIASVPSVDA. A propeptide spanning residues 23–46 is cleaved from the precursor; that stretch reads ELKAKDDMPQASFHDNAERDQQKK.

In terms of assembly, homodimer; disulfide-linked. 5 disulfide bonds are present in each homodimer: two intrachain disulfide bonds per subunit, and one interchain disulfide bond linking the two subunits. As to expression, expressed by the venom duct.

It is found in the secreted. The chain is Conotoxin TxXIIIA from Conus textile (Cloth-of-gold cone).